A 74-amino-acid chain; its full sequence is Protein krueppel (74 aa).

4 C2H2-type zinc fingers span residues 1 to 4 (ERTH), 10 to 32 (FECP…MRLH), 38 to 60 (YHCS…LRVH), and 66 to 74 (YACELCAAK).

It belongs to the krueppel C2H2-type zinc-finger protein family.

The protein localises to the nucleus. In terms of biological role, krueppel is a gap class segmentation protein. This is Protein krueppel (Kr) from Apis mellifera (Honeybee).